Here is a 240-residue protein sequence, read N- to C-terminus: Biotin--[acetyl-CoA-carboxylase] ligase (240 aa).

The BPL/LPL catalytic domain maps to M1–D176. Residues S7–N9, Q30, R34–R36, and K102 contribute to the biotin site.

The protein belongs to the biotin--protein ligase family.

The catalysed reaction is biotin + L-lysyl-[protein] + ATP = N(6)-biotinyl-L-lysyl-[protein] + AMP + diphosphate + H(+). Activates biotin to form biotinyl-5'-adenylate and transfers the biotin moiety to biotin-accepting proteins. The sequence is that of Biotin--[acetyl-CoA-carboxylase] ligase (birA) from Paracoccus denitrificans.